A 389-amino-acid chain; its full sequence is Chalcone synthase 5 (389 aa).

Cys-164 is a catalytic residue.

It belongs to the thiolase-like superfamily. Chalcone/stilbene synthases family.

It catalyses the reaction (E)-4-coumaroyl-CoA + 3 malonyl-CoA + 3 H(+) = 2',4,4',6'-tetrahydroxychalcone + 3 CO2 + 4 CoA. It participates in secondary metabolite biosynthesis; flavonoid biosynthesis. Its function is as follows. The primary product of this enzyme is 4,2',4',6'-tetrahydroxychalcone (also termed naringenin-chalcone or chalcone) which can under specific conditions spontaneously isomerize into naringenin. The protein is Chalcone synthase 5 (CHS5) of Trifolium subterraneum (Subterranean clover).